The chain runs to 190 residues: Pyridoxal 5'-phosphate synthase subunit PdxT (190 aa).

Residue 46–48 (GES) participates in L-glutamine binding. Catalysis depends on Cys78, which acts as the Nucleophile. L-glutamine-binding positions include Arg105 and 134 to 135 (IR). Residues His170 and Glu172 each act as charge relay system in the active site.

This sequence belongs to the glutaminase PdxT/SNO family. In the presence of PdxS, forms a dodecamer of heterodimers. Only shows activity in the heterodimer.

The enzyme catalyses aldehydo-D-ribose 5-phosphate + D-glyceraldehyde 3-phosphate + L-glutamine = pyridoxal 5'-phosphate + L-glutamate + phosphate + 3 H2O + H(+). It carries out the reaction L-glutamine + H2O = L-glutamate + NH4(+). It functions in the pathway cofactor biosynthesis; pyridoxal 5'-phosphate biosynthesis. Its function is as follows. Catalyzes the hydrolysis of glutamine to glutamate and ammonia as part of the biosynthesis of pyridoxal 5'-phosphate. The resulting ammonia molecule is channeled to the active site of PdxS. This chain is Pyridoxal 5'-phosphate synthase subunit PdxT, found in Clostridium beijerinckii (strain ATCC 51743 / NCIMB 8052) (Clostridium acetobutylicum).